Reading from the N-terminus, the 868-residue chain is Probable beta-glucosidase F (868 aa).

The signal sequence occupies residues Met1–Ala20. The tract at residues Ser21–Tyr40 is disordered. N-linked (GlcNAc...) asparagine glycans are attached at residues Asn65, Asn73, and Asn257. Residue Asp285 is part of the active site. N-linked (GlcNAc...) asparagine glycans are attached at residues Asn328, Asn360, Asn395, Asn421, and Asn726. Positions Tyr731–Gly752 are disordered.

It belongs to the glycosyl hydrolase 3 family.

The protein resides in the secreted. It catalyses the reaction Hydrolysis of terminal, non-reducing beta-D-glucosyl residues with release of beta-D-glucose.. Its pathway is glycan metabolism; cellulose degradation. Its function is as follows. Beta-glucosidases are one of a number of cellulolytic enzymes involved in the degradation of cellulosic biomass. Catalyzes the last step releasing glucose from the inhibitory cellobiose. In Emericella nidulans (strain FGSC A4 / ATCC 38163 / CBS 112.46 / NRRL 194 / M139) (Aspergillus nidulans), this protein is Probable beta-glucosidase F (bglF).